We begin with the raw amino-acid sequence, 262 residues long: Putative hydro-lyase ROP_32680 (262 aa).

The protein belongs to the D-glutamate cyclase family.

This is Putative hydro-lyase ROP_32680 from Rhodococcus opacus (strain B4).